The sequence spans 631 residues: Forkhead box protein O1 (631 aa).

The segment covering M1 to L11 has biased composition (pro residues). 4 disordered regions span residues M1–G57, D90–N147, S223–Q324, and P372–E404. Composition is skewed to low complexity over residues N37 to P48 and Q100 to A135. Positions W149–A243 form a DNA-binding region, fork-head. Positions A253–A264 are enriched in basic residues. Over residues S265–S282 the composition is skewed to low complexity. Composition is skewed to polar residues over residues R303–G315 and A381–S403.

Post-translationally, phosphorylated by AKT1; insulin-induced. In terms of processing, IGF1 rapidly induces phosphorylation of Thr-28, Ser-245 and Ser-308. Phosphorylation of Ser-245 decreases DNA-binding activity and promotes the phosphorylation of Thr-28, and Ser-308, which leads to nuclear exclusion and loss of function. Phosphorylation of Ser-318 is independent of IGF1 and leads to reduced function. As to expression, localized to the animal hemisphere during early cleavage stages. At early tadpole stages, expressed in the branchial arches, pronephros and liver. Within the head, expressed in the forming thyroid gland and in head mesenchyme anterior to the eyes.

It is found in the cytoplasm. The protein localises to the nucleus. Transcription factor that regulates metabolic homeostasis in response to oxidative stress. Binds to the consensus sequence 5'-TT[G/A]TTTTG-3' and the related Daf-16 family binding element (DBE) with consensus sequence 5'-TT[G/A]TTTAC-3'. Main regulator of redox balance and osteoblast numbers and controls bone mass. Orchestrates the endocrine function of the skeleton in regulating glucose metabolism. Also acts as a key regulator of chondrogenic commitment of skeletal progenitor cells in response to lipid availability: when lipids levels are low, translocates to the nucleus and promotes expression of sox9, which induces chondrogenic commitment and suppresses fatty acid oxidation. Acts synergistically with atf4 to suppress osteocalcin/bglap activity, increasing glucose levels and triggering glucose intolerance and insulin insensitivity. Also suppresses the transcriptional activity of runx2, an upstream activator of osteocalcin/bglap. May act as a positive regulator of apoptosis in cardiac smooth muscle cells as a result of its transcriptional activation of pro-apoptotic genes. In Xenopus laevis (African clawed frog), this protein is Forkhead box protein O1.